A 1171-amino-acid chain; its full sequence is MSLRFVIGRAGSGKSTLCLHEVQEELKQRPRGETILYLVPEQMTFQTQQALIGSEDVRGSIRAQVFSFSRLAWKVLQEVGGASRLHIDEAGVHMLLRKIVESRKDGLSVFQKAAEQNGFFEHLGSMIAEFKRYNVTPSNVYEMWQQLDAHSSSAEQKLLANKVYDLQLLYDDFERALIGKYLDSEDYLQLLVEKLPQSEYVKGAEIYIDGFHSFSPQELEIVRQLMICGARVTITLTIDEKTLAQPVNELDLFYETTLTYEKIKQVAREEKIEIEKTIPLMEQPRFHSPALAHLEAHYEARPNEKFNGEASVTIHTAANLRAEVEGVAREIRRLVAEENYRYRDVAVLLRNGESYYDVMRTLFTDYNIPHFIDEKRPMSHHPLVECIRSALEIISGNWRYDAVFRCVKTELLYPLDVRKETMREEMDEFENYCLAYGVQGKRWTSEDPWMYRRYRSLDDTNGMITDSEREMEEKINRLRDVVRTPVIRMQKRLKRAGTVMQMCEAVYLFLEELDVPKKLEALRIRAEESGDFLFATDHEQVWEEVMNLLDTFVEMLGEEKMSLSMFTDVMSTGLEALQFANIPPSLDQVLIANIDRSRLSNVKATFVIGVNEGVIPAAPMDEGMLSDEERDVLSAAGIELAPTTRQTLLEEQFVMYQMVTRATEKLYISCPLADEEGKTLLASSFIKKIKRMFPDVKDTFITNDVNDLSRSEQISFVATPEVTLSYVMQQLQTWKRYGFEGNLDFWWDVYNFYVTSDEWKQKSSRVLSSLFYRNRAQKLSTAVSRDLYGDKIKGSVSRMELFNRCAYAHFAQHGLSLRERDIFKLDAPDIGELFHAALKRIADRLLRENRTWADLSIKECEHLSTVVIEEIAPLLQRQILLSSNRHFYLKQKLQQIIFRTSIILREHAKSSGFVPVDLEVPFGMGGTGSLPPMEFSLPNGVKMEVVGRIDRVDKAEDENGTFLRIIDYKSSSKALDLTEVYYGLALQMLTYLDVVTSNAHTWMKKGHAASPAGVLYFHIHNPIVEVKGDASEAEIEKEILKKFKMKGLVLGDADVVRLMDNKLSTGSSDIISAGLKKDGSFSARSSIASEQEFNVLQKYVHHTFENIGKDITEGVIDIAPYKKGNKAACTFCNFKSVCQFDESLEDNQFRTLKDMKDSEAMEKIREEVGGE.

In terms of domain architecture, UvrD-like helicase ATP-binding spans 1–343 (MSLRFVIGRA…LVAEENYRYR (343 aa)). An ATP-binding site is contributed by 8-15 (GRAGSGKS). The UvrD-like helicase C-terminal domain occupies 281 to 587 (MEQPRFHSPA…QFANIPPSLD (307 aa)). Residues C805, C1129, C1132, and C1138 each contribute to the [4Fe-4S] cluster site.

The protein belongs to the helicase family. AddB/RexB type 1 subfamily. As to quaternary structure, heterodimer of AddA and AddB. The cofactor is Mg(2+). Requires [4Fe-4S] cluster as cofactor.

Its function is as follows. The heterodimer acts as both an ATP-dependent DNA helicase and an ATP-dependent, dual-direction single-stranded exonuclease. Recognizes the chi site generating a DNA molecule suitable for the initiation of homologous recombination. The AddB subunit has 5' -&gt; 3' nuclease activity but not helicase activity. This Bacillus thuringiensis subsp. konkukian (strain 97-27) protein is ATP-dependent helicase/deoxyribonuclease subunit B.